The following is a 359-amino-acid chain: Fructose-bisphosphate aldolase, cytoplasmic isozyme (359 aa).

The substrate site is built by R52 and K142. E184 serves as the catalytic Proton acceptor. K226 (schiff-base intermediate with dihydroxyacetone-P) is an active-site residue.

Belongs to the class I fructose-bisphosphate aldolase family.

It localises to the cytoplasm. It carries out the reaction beta-D-fructose 1,6-bisphosphate = D-glyceraldehyde 3-phosphate + dihydroxyacetone phosphate. It participates in carbohydrate degradation; glycolysis; D-glyceraldehyde 3-phosphate and glycerone phosphate from D-glucose: step 4/4. The chain is Fructose-bisphosphate aldolase, cytoplasmic isozyme (ALDC) from Cicer arietinum (Chickpea).